Here is a 152-residue protein sequence, read N- to C-terminus: MPELLLLNGPNLNLLGTREPGIYGSDTLADIERRLGEQCAGAGVRFSAFQTNAEHALIDRIHQAGRAGVDFILINPGAWTHTSIALRDALLGVGIPFIEIHISNVHAREPFRRQSYLADVAVGVISGLGVHGYELALQAALKRLDGSPRGQH.

The Proton acceptor role is filled by Y23. Positions 75, 81, and 88 each coordinate substrate. Residue H101 is the Proton donor of the active site. Substrate-binding positions include 102–103 (IS) and R112.

Belongs to the type-II 3-dehydroquinase family. In terms of assembly, homododecamer.

The catalysed reaction is 3-dehydroquinate = 3-dehydroshikimate + H2O. It functions in the pathway metabolic intermediate biosynthesis; chorismate biosynthesis; chorismate from D-erythrose 4-phosphate and phosphoenolpyruvate: step 3/7. Functionally, catalyzes a trans-dehydration via an enolate intermediate. In Alkalilimnicola ehrlichii (strain ATCC BAA-1101 / DSM 17681 / MLHE-1), this protein is 3-dehydroquinate dehydratase.